Here is a 224-residue protein sequence, read N- to C-terminus: Oocyte zinc finger protein XlCOF6.1 (224 aa).

8 consecutive C2H2-type zinc fingers follow at residues 6 to 28 (FSCS…CRSH), 34 to 56 (FHCT…QRYH), 62 to 84 (FTCF…IRMH), 90 to 112 (FSCS…QKIH), 118 to 140 (FSCS…YRTH), 146 to 168 (FPCP…RRTH), 174 to 196 (FACS…RLGH), and 202 to 224 (FSCS…LKSH).

The protein belongs to the krueppel C2H2-type zinc-finger protein family.

Its subcellular location is the nucleus. In terms of biological role, may be involved in transcriptional regulation. In Xenopus laevis (African clawed frog), this protein is Oocyte zinc finger protein XlCOF6.1.